Consider the following 550-residue polypeptide: Beta-cubebene synthase (550 aa).

Positions 303, 307, 447, and 455 each coordinate Mg(2+). The short motif at 303–307 (DDTYD) is the DDXXD motif element.

Belongs to the terpene synthase family. Tpsa subfamily. Mg(2+) is required as a cofactor. Expressed in young developing leaves and in stamens. Not detected in tepals and carpels.

The enzyme catalyses (2E,6E)-farnesyl diphosphate = beta-cubebene + diphosphate. It functions in the pathway secondary metabolite biosynthesis; terpenoid biosynthesis. Sesquiterpene synthase converting farnesyl diphosphate into beta-cubebene (24.5%), alpha-muurolene (19.3%), delta-cadinol (18.6%), delta-elemene (16.0%), tau-muurolene (10.8%), and beta-elemene (10.8%). No activity with geranyl diphosphate or geranylgeranyl diphosphate. The chain is Beta-cubebene synthase from Magnolia grandiflora (Southern magnolia).